The following is a 338-amino-acid chain: Phenylalanine--tRNA ligase alpha subunit (338 aa).

Mg(2+) is bound at residue glutamate 252.

It belongs to the class-II aminoacyl-tRNA synthetase family. Phe-tRNA synthetase alpha subunit type 1 subfamily. As to quaternary structure, tetramer of two alpha and two beta subunits. Mg(2+) is required as a cofactor.

It localises to the cytoplasm. The catalysed reaction is tRNA(Phe) + L-phenylalanine + ATP = L-phenylalanyl-tRNA(Phe) + AMP + diphosphate + H(+). This chain is Phenylalanine--tRNA ligase alpha subunit, found in Pseudomonas putida (strain ATCC 700007 / DSM 6899 / JCM 31910 / BCRC 17059 / LMG 24140 / F1).